We begin with the raw amino-acid sequence, 228 residues long: Protein crossbronx homolog (228 aa).

Positions 14–168 constitute a UBC core domain; the sequence is LQEYKILAEY…VEQCVEDSQR (155 aa).

The protein belongs to the ubiquitin-conjugating enzyme family. FTS subfamily.

In Anopheles gambiae (African malaria mosquito), this protein is Protein crossbronx homolog.